The following is a 572-amino-acid chain: Potassium-transporting ATPase potassium-binding subunit (572 aa).

11 helical membrane passes run 5-25 (LAAGLQIGFVILALAIAYVPL), 71-91 (VGYTLSLLGFSFASVIFLYVL), 97-117 (VLPLSGGLGAVSPAVAFNTAV), 142-162 (GLAVQNFVSAAVGLTVAVALI), 188-208 (ILLPLSFAVALILLSQGTIQS), 258-278 (PTPLSNVIEILAILIIPVCLT), 292-312 (LTVLSVMGTLFGGMLALVTWA), 387-407 (GLYGILVLAIIAVFVGGLLVG), 422-442 (ITMAALSVLVMPALVLVGTGI), 500-520 (LGMAMLLGRFLPIIFTLALAG), and 548-568 (GTVLLVAALTFFPALALGPIA).

Belongs to the KdpA family. In terms of assembly, the system is composed of three essential subunits: KdpA, KdpB and KdpC.

It localises to the cell membrane. Functionally, part of the high-affinity ATP-driven potassium transport (or Kdp) system, which catalyzes the hydrolysis of ATP coupled with the electrogenic transport of potassium into the cytoplasm. This subunit binds the extracellular potassium ions and delivers the ions to the membrane domain of KdpB through an intramembrane tunnel. In Mycobacteroides abscessus (strain ATCC 19977 / DSM 44196 / CCUG 20993 / CIP 104536 / JCM 13569 / NCTC 13031 / TMC 1543 / L948) (Mycobacterium abscessus), this protein is Potassium-transporting ATPase potassium-binding subunit.